A 55-amino-acid chain; its full sequence is Small ribosomal subunit protein uS14 (55 aa).

Positions 20, 23, 38, and 41 each coordinate Zn(2+).

This sequence belongs to the universal ribosomal protein uS14 family. It depends on Zn(2+) as a cofactor.

The polypeptide is Small ribosomal subunit protein uS14 (rps29) (Dictyostelium discoideum (Social amoeba)).